The sequence spans 264 residues: MDAIKKKMQAMKLEKDNAMDRADTLEQQNKEANLRAEKTEEEIRATQKKMQQVENELDQAQEQLSAANTKLDEKEKALQNAEGEVAALNRRIQLPEEDLERSEERLNTATTKLAEASQAADESERMRKVLENRSLSDEERMDALENQLKEARFLAEEADRKYDEVARKLAMVEADLERAEERAESGESKIVELEEELRVVGNNLKSLEVSEEKANQREETYKEQIKTLANKLKAAEARAEFAERSVQKLQKEVDRLEDELVNEK.

Met1 is subject to N-acetylmethionine. Disordered stretches follow at residues 1–56 (MDAI…VENE) and 92–126 (IQLP…SERM). Residues 1–264 (MDAIKKKMQA…RLEDELVNEK (264 aa)) are a coiled coil. Residues 12-45 (KLEKDNAMDRADTLEQQNKEANLRAEKTEEEIRA) show a composition bias toward basic and acidic residues.

It belongs to the tropomyosin family. Homodimer. In terms of tissue distribution, expressed in muscle (at protein level). Expressed in claw muscles.

Tropomyosin, in association with the troponin complex, plays a central role in the calcium dependent regulation of muscle contraction. The polypeptide is Tropomyosin Cha f 1.0101 (Charybdis feriata (Crucifix crab)).